The chain runs to 303 residues: N-acetyl-D-glucosamine kinase (303 aa).

ATP is bound by residues 4–11 (GFDIGGTK) and 133–140 (GVGGGLIF). Zn(2+)-binding residues include histidine 157, cysteine 177, cysteine 179, and cysteine 184.

This sequence belongs to the ROK (NagC/XylR) family. NagK subfamily.

The catalysed reaction is N-acetyl-D-glucosamine + ATP = N-acetyl-D-glucosamine 6-phosphate + ADP + H(+). Its pathway is cell wall biogenesis; peptidoglycan recycling. Functionally, catalyzes the phosphorylation of N-acetyl-D-glucosamine (GlcNAc) derived from cell-wall degradation, yielding GlcNAc-6-P. The protein is N-acetyl-D-glucosamine kinase of Escherichia coli O9:H4 (strain HS).